The primary structure comprises 509 residues: ATP synthase subunit alpha (509 aa).

169 to 176 provides a ligand contact to ATP; it reads GDRQTGKT.

Belongs to the ATPase alpha/beta chains family. In terms of assembly, F-type ATPases have 2 components, CF(1) - the catalytic core - and CF(0) - the membrane proton channel. CF(1) has five subunits: alpha(3), beta(3), gamma(1), delta(1), epsilon(1). CF(0) has three main subunits: a(1), b(2) and c(9-12). The alpha and beta chains form an alternating ring which encloses part of the gamma chain. CF(1) is attached to CF(0) by a central stalk formed by the gamma and epsilon chains, while a peripheral stalk is formed by the delta and b chains.

It localises to the cell inner membrane. It catalyses the reaction ATP + H2O + 4 H(+)(in) = ADP + phosphate + 5 H(+)(out). Produces ATP from ADP in the presence of a proton gradient across the membrane. The alpha chain is a regulatory subunit. The polypeptide is ATP synthase subunit alpha (Sinorhizobium fredii (strain NBRC 101917 / NGR234)).